Consider the following 955-residue polypeptide: 2-oxoglutarate dehydrogenase E1 component (955 aa).

It belongs to the alpha-ketoglutarate dehydrogenase family. As to quaternary structure, homodimer. Part of the 2-oxoglutarate dehydrogenase (OGDH) complex composed of E1 (2-oxoglutarate dehydrogenase), E2 (dihydrolipoamide succinyltransferase) and E3 (dihydrolipoamide dehydrogenase); the complex contains multiple copies of the three enzymatic components (E1, E2 and E3). Requires thiamine diphosphate as cofactor.

The enzyme catalyses N(6)-[(R)-lipoyl]-L-lysyl-[protein] + 2-oxoglutarate + H(+) = N(6)-[(R)-S(8)-succinyldihydrolipoyl]-L-lysyl-[protein] + CO2. E1 component of the 2-oxoglutarate dehydrogenase (OGDH) complex which catalyzes the decarboxylation of 2-oxoglutarate, the first step in the conversion of 2-oxoglutarate to succinyl-CoA and CO(2). The sequence is that of 2-oxoglutarate dehydrogenase E1 component from Bacillus cereus (strain ATCC 14579 / DSM 31 / CCUG 7414 / JCM 2152 / NBRC 15305 / NCIMB 9373 / NCTC 2599 / NRRL B-3711).